Here is a 92-residue protein sequence, read N- to C-terminus: PqqA binding protein (92 aa).

Belongs to the PqqD family. In terms of assembly, monomer. Interacts with PqqE.

Its pathway is cofactor biosynthesis; pyrroloquinoline quinone biosynthesis. Functionally, functions as a PqqA binding protein and presents PqqA to PqqE, in the pyrroloquinoline quinone (PQQ) biosynthetic pathway. The chain is PqqA binding protein from Stutzerimonas stutzeri (strain A1501) (Pseudomonas stutzeri).